The sequence spans 425 residues: uncharacterized protein (425 aa).

This sequence to K.pneumoniae SorE.

This is an uncharacterized protein from Escherichia coli (strain K12).